Consider the following 386-residue polypeptide: Galactokinase (386 aa).

35 to 38 (EHTD) is a binding site for substrate. ATP-binding positions include serine 69 and 125–131 (GAGLSSS). 2 residues coordinate Mg(2+): serine 131 and glutamate 163. The active-site Proton acceptor is the aspartate 175. Tyrosine 224 provides a ligand contact to substrate.

The protein belongs to the GHMP kinase family. GalK subfamily.

It localises to the cytoplasm. It catalyses the reaction alpha-D-galactose + ATP = alpha-D-galactose 1-phosphate + ADP + H(+). It functions in the pathway carbohydrate metabolism; galactose metabolism. Catalyzes the transfer of the gamma-phosphate of ATP to D-galactose to form alpha-D-galactose-1-phosphate (Gal-1-P). The sequence is that of Galactokinase from Vibrio parahaemolyticus serotype O3:K6 (strain RIMD 2210633).